Consider the following 216-residue polypeptide: Ceramide-1-phosphate transfer protein (216 aa).

Aspartate 56, lysine 60, arginine 108, arginine 112, and histidine 152 together coordinate an N-acylsphingoid base 1-phosphate.

It belongs to the GLTP family.

It localises to the cytoplasm. It is found in the cytosol. The protein resides in the golgi apparatus. The protein localises to the trans-Golgi network membrane. Its subcellular location is the cell membrane. It localises to the endosome membrane. It is found in the nucleus outer membrane. It catalyses the reaction N-(hexadecanoyl)-sphing-4-enine-1-phosphate(in) = N-(hexadecanoyl)-sphing-4-enine-1-phosphate(out). The enzyme catalyses N-(9Z-octadecenoyl)-sphing-4-enine-1-phosphate(in) = N-(9Z-octadecenoyl)-sphing-4-enine-1-phosphate(out). Functionally, mediates the intracellular transfer of ceramide-1-phosphate (C1P) between organelle membranes and the cell membrane. Required for normal structure of the Golgi stacks. Can bind phosphoceramides with a variety of aliphatic chains, but has a preference for lipids with saturated C16:0 or monounsaturated C18:1 aliphatic chains, and is inefficient with phosphoceramides containing lignoceryl (C24:0). Plays a role in the regulation of the cellular levels of ceramide-1-phosphate, and thereby contributes to the regulation of phospholipase PLA2G4A activity and the release of arachidonic acid. Has no activity with galactosylceramide, lactosylceramide, sphingomyelin, phosphatidylcholine, phosphatidic acid and ceramide. C1P transfer is stimulated by phosphatidylserine in C1P source vesicles. Regulates autophagy, inflammasome mediated IL1B and IL18 processing, and pyroptosis, but not apoptosis. This Mus musculus (Mouse) protein is Ceramide-1-phosphate transfer protein.